The primary structure comprises 633 residues: Electron transfer flavoprotein-ubiquinone oxidoreductase, mitochondrial (633 aa).

The N-terminal 90 residues, 1 to 90 (MHRFLVKLSS…NGITSSRCIS (90 aa)), are a transit peptide targeting the mitochondrion. Residue 102-116 (VLIVGAGPAGLSAAI) participates in FAD binding. An intramembrane segment occupies 140–161 (VGGHIISGNVFEPLALDELLPH). A ubiquinone contacts are provided by G334 and G335. Residues 401 to 421 (IPYPVFPGGAIIGCSAGFLNV) lie within the membrane without spanning it. 4 residues coordinate [4Fe-4S] cluster: C578, C602, C605, and C608. Residues 593–622 (PKLQINAQNCLHCKACDIKDPKQNIEWTVP) form the 4Fe-4S ferredoxin-type domain.

The protein belongs to the ETF-QO/FixC family. It depends on [4Fe-4S] cluster as a cofactor. Requires FAD as cofactor.

It localises to the mitochondrion inner membrane. It catalyses the reaction a ubiquinone + reduced [electron-transfer flavoprotein] = a ubiquinol + oxidized [electron-transfer flavoprotein] + H(+). With respect to regulation, up-regulated by KIN10, by S1-bZIP specific dimers, and also by C/S1 bZIP heterodimers. Its function is as follows. Accepts electrons from ETF and reduces ubiquinone. May act downstream of IVD and D2HGDH in the degradation of phytol or chlorophyll during dark-induced senescence and sugar starvation. The chain is Electron transfer flavoprotein-ubiquinone oxidoreductase, mitochondrial (ETFQO) from Arabidopsis thaliana (Mouse-ear cress).